A 27-amino-acid chain; its full sequence is U18-ctenitoxin-Co1a (27 aa).

The protein belongs to the u18-CNTX family. Expressed by the venom gland.

It localises to the secreted. Its function is as follows. Not toxic to mice by intracerebroventricular injection. The polypeptide is U18-ctenitoxin-Co1a (Ctenus ornatus (Brazilian spider)).